The sequence spans 226 residues: UPF0173 metal-dependent hydrolase Tpet_1587 (226 aa).

Belongs to the UPF0173 family.

In Thermotoga petrophila (strain ATCC BAA-488 / DSM 13995 / JCM 10881 / RKU-1), this protein is UPF0173 metal-dependent hydrolase Tpet_1587.